The sequence spans 297 residues: Nucleotide-binding protein BMA10229_A1510 (297 aa).

ATP is bound at residue 8–15; the sequence is GISGSGKS. A GTP-binding site is contributed by 57–60; sequence DARS.

Belongs to the RapZ-like family.

Functionally, displays ATPase and GTPase activities. The sequence is that of Nucleotide-binding protein BMA10229_A1510 from Burkholderia mallei (strain NCTC 10229).